Consider the following 134-residue polypeptide: Small ribosomal subunit protein uS8c (134 aa).

This sequence belongs to the universal ribosomal protein uS8 family. Part of the 30S ribosomal subunit.

It localises to the plastid. It is found in the chloroplast. One of the primary rRNA binding proteins, it binds directly to 16S rRNA central domain where it helps coordinate assembly of the platform of the 30S subunit. In Phaseolus angularis (Azuki bean), this protein is Small ribosomal subunit protein uS8c (rps8).